Reading from the N-terminus, the 355-residue chain is Tetraacyldisaccharide 4'-kinase (355 aa).

Serine 48–threonine 55 provides a ligand contact to ATP.

It belongs to the LpxK family.

It carries out the reaction a lipid A disaccharide + ATP = a lipid IVA + ADP + H(+). The protein operates within glycolipid biosynthesis; lipid IV(A) biosynthesis; lipid IV(A) from (3R)-3-hydroxytetradecanoyl-[acyl-carrier-protein] and UDP-N-acetyl-alpha-D-glucosamine: step 6/6. Transfers the gamma-phosphate of ATP to the 4'-position of a tetraacyldisaccharide 1-phosphate intermediate (termed DS-1-P) to form tetraacyldisaccharide 1,4'-bis-phosphate (lipid IVA). In Pelodictyon phaeoclathratiforme (strain DSM 5477 / BU-1), this protein is Tetraacyldisaccharide 4'-kinase.